A 457-amino-acid chain; its full sequence is Dihydrolipoyl dehydrogenase (457 aa).

FAD contacts are provided by residues 32 to 40, Lys49, and Ala113; that span reads EKEYFGGVC. Residues Cys40 and Cys45 are joined by a disulfide bond. NAD(+) contacts are provided by residues 178–182, Val235, and 262–265; these read GGGVI and SIGR. The FAD site is built by Asp303 and Ala311. His437 serves as the catalytic Proton acceptor.

It belongs to the class-I pyridine nucleotide-disulfide oxidoreductase family. In terms of assembly, homodimer. Requires FAD as cofactor.

It is found in the cytoplasm. The catalysed reaction is N(6)-[(R)-dihydrolipoyl]-L-lysyl-[protein] + NAD(+) = N(6)-[(R)-lipoyl]-L-lysyl-[protein] + NADH + H(+). Lipoamide dehydrogenase is a component of the alpha-ketoacid dehydrogenase complexes. This chain is Dihydrolipoyl dehydrogenase (pdhD), found in Mycoplasma pneumoniae (strain ATCC 29342 / M129 / Subtype 1) (Mycoplasmoides pneumoniae).